The following is a 186-amino-acid chain: Cell division protein SepF (186 aa).

Positions 24 to 91 are disordered; sequence EDEEEEERYA…HNPPHLRAVP (68 aa).

This sequence belongs to the SepF family. Homodimer. Interacts with FtsZ.

It localises to the cytoplasm. In terms of biological role, cell division protein that is part of the divisome complex and is recruited early to the Z-ring. Probably stimulates Z-ring formation, perhaps through the cross-linking of FtsZ protofilaments. Its function overlaps with FtsA. This chain is Cell division protein SepF, found in Rubrobacter xylanophilus (strain DSM 9941 / JCM 11954 / NBRC 16129 / PRD-1).